The sequence spans 101 residues: Urease subunit beta (101 aa).

This sequence belongs to the urease beta subunit family. In terms of assembly, heterotrimer of UreA (gamma), UreB (beta) and UreC (alpha) subunits. Three heterotrimers associate to form the active enzyme.

It is found in the cytoplasm. The catalysed reaction is urea + 2 H2O + H(+) = hydrogencarbonate + 2 NH4(+). The protein operates within nitrogen metabolism; urea degradation; CO(2) and NH(3) from urea (urease route): step 1/1. The polypeptide is Urease subunit beta (Stutzerimonas stutzeri (strain A1501) (Pseudomonas stutzeri)).